We begin with the raw amino-acid sequence, 427 residues long: Cyclin-L1-1 (427 aa).

The tract at residues 258 to 427 (HRRTSDTNAS…SRDKDRHRRQ (170 aa)) is disordered. Residues 263-276 (DTNASKESPATTVA) are compositionally biased toward polar residues. Composition is skewed to basic and acidic residues over residues 289–311 (QEKD…DDGK), 328–382 (KSEK…DRDR), 390–400 (DRSSGYSDKEK), and 407–421 (RDRG…SRDK).

It belongs to the cyclin family. Cyclin L subfamily.

This Oryza sativa subsp. japonica (Rice) protein is Cyclin-L1-1 (CYCL1-1).